The following is a 153-amino-acid chain: Arachidonate 5-lipoxygenase-activating protein (153 aa).

Residues 1 to 8 (MDQETVGN) are Lumenal-facing. A helical membrane pass occupies residues 9–30 (VVLLAIVTLISVIQNGFFAHKV). The Cytoplasmic segment spans residues 31–52 (EHESKTQNGRSFQRTGTLAFER). A helical transmembrane segment spans residues 53 to 77 (VYTANQNCVDAYPTFLVMLWSAGLL). Over 78-80 (CSQ) the chain is Lumenal. A helical membrane pass occupies residues 81–102 (VPAAFAGLMYLFVRQKYFVGYL). Residues 103–107 (GERRQ) are Cytoplasmic-facing. The stretch at 108–115 (STPGYIFG) is an intramembrane region. Residues 116 to 128 (KRIILFLFLMSLA) form a helical membrane-spanning segment. The Lumenal segment spans residues 129–153 (GIFNYYLILFFGSDFENYIKTITTT).

Belongs to the MAPEG family. As to quaternary structure, homotrimer. Interacts with LTC4S and ALOX5.

The protein resides in the nucleus membrane. It localises to the endoplasmic reticulum membrane. Its function is as follows. Required for leukotriene biosynthesis by ALOX5 (5-lipoxygenase). Anchors ALOX5 to the membrane. Binds arachidonic acid, and could play an essential role in the transfer of arachidonic acid to ALOX5. Binds to MK-886, a compound that blocks the biosynthesis of leukotrienes. This Equus caballus (Horse) protein is Arachidonate 5-lipoxygenase-activating protein (ALOX5AP).